The chain runs to 87 residues: DNA-directed RNA polymerase subunit omega (87 aa).

It belongs to the RNA polymerase subunit omega family. As to quaternary structure, the RNAP catalytic core consists of 2 alpha, 1 beta, 1 beta' and 1 omega subunit. When a sigma factor is associated with the core the holoenzyme is formed, which can initiate transcription.

It catalyses the reaction RNA(n) + a ribonucleoside 5'-triphosphate = RNA(n+1) + diphosphate. Promotes RNA polymerase assembly. Latches the N- and C-terminal regions of the beta' subunit thereby facilitating its interaction with the beta and alpha subunits. The chain is DNA-directed RNA polymerase subunit omega from Azotobacter vinelandii (strain DJ / ATCC BAA-1303).